Consider the following 276-residue polypeptide: Alpha N-terminal protein methyltransferase 1 (276 aa).

S-adenosyl-L-methionine contacts are provided by residues Gly-96, Arg-101, 118–120, 149–150, and Gln-165; these read EPV and LQ.

Belongs to the methyltransferase superfamily. NTM1 family.

The catalysed reaction is N-terminal L-alanyl-L-prolyl-L-lysyl-[protein] + 3 S-adenosyl-L-methionine = N-terminal N,N,N-trimethyl-L-alanyl-L-prolyl-L-lysyl-[protein] + 3 S-adenosyl-L-homocysteine + 3 H(+). The enzyme catalyses N-terminal L-seryl-L-prolyl-L-lysyl-[protein] + 3 S-adenosyl-L-methionine = N-terminal N,N,N-trimethyl-L-seryl-L-prolyl-L-lysyl-[protein] + 3 S-adenosyl-L-homocysteine + 3 H(+). It catalyses the reaction N-terminal L-prolyl-L-prolyl-L-lysyl-[protein] + 2 S-adenosyl-L-methionine = N-terminal N,N-dimethyl-L-prolyl-L-prolyl-L-lysyl-[protein] + 2 S-adenosyl-L-homocysteine + 2 H(+). In terms of biological role, alpha-N-methyltransferase that methylates the N-terminus of target proteins containing the N-terminal motif [Ala/Pro/Ser]-Pro-Lys when the initiator Met is cleaved. Specifically catalyzes mono-, di- or tri-methylation of exposed alpha-amino group of Ala or Ser residue in the [Ala/Ser]-Pro-Lys motif and mono- or di-methylation of Pro in the Pro-Pro-Lys motif. This chain is Alpha N-terminal protein methyltransferase 1, found in Arabidopsis thaliana (Mouse-ear cress).